A 156-amino-acid polypeptide reads, in one-letter code: Transcription elongation factor GreA (156 aa).

Positions 7 to 27 form a coiled coil; sequence MTQEGLDKLKLELENLKLVKR.

This sequence belongs to the GreA/GreB family.

Necessary for efficient RNA polymerase transcription elongation past template-encoded arresting sites. The arresting sites in DNA have the property of trapping a certain fraction of elongating RNA polymerases that pass through, resulting in locked ternary complexes. Cleavage of the nascent transcript by cleavage factors such as GreA or GreB allows the resumption of elongation from the new 3'terminus. GreA releases sequences of 2 to 3 nucleotides. The protein is Transcription elongation factor GreA of Lactococcus lactis subsp. lactis (strain IL1403) (Streptococcus lactis).